A 304-amino-acid chain; its full sequence is C-type lectin domain family 10 member A (304 aa).

At 1–35 the chain is on the cytoplasmic side; the sequence is MIYENLQNSRIEEKTQEPGKAPSQSFLWRILSWTH. The chain crosses the membrane as a helical; Signal-anchor for type II membrane protein span at residues 36-56; it reads LLLFSLGLSLLLLVVVSVIGS. The Extracellular segment spans residues 57 to 304; sequence QNSQLRRDLG…ICEMKLAKES (248 aa). N74 and N166 each carry an N-linked (GlcNAc...) asparagine glycan. One can recognise a C-type lectin domain in the interval 172 to 298; sequence CCPLHWTEHE…QRTFRWICEM (127 aa). 3 disulfide bridges follow: C173/C184, C201/C296, and C274/C288.

In terms of assembly, homooligomer. Interacts with SIGLEC1, which may act as a counter-receptor for CLEC10A in lymph node. Detected in lymph node in the subcapsular sinus, interfollicular regions, T and B-cell boundary and in the areas surrounding high endothelial venules (at protein level). Expressed on the surface of activated macrophages. Expressed in heart, lung, testis, skeletal muscle, spleen, brain, kidney and thymus. Expressed in P388, RAW 264.7 and M1 cell lines.

Its subcellular location is the membrane. In terms of biological role, recognizes terminal galactose and N-acetylgalactosamine units. May participate in the interaction between tumoricidal macrophages and tumor cells. Plays a role in the recruitment of inflammatory monocytes to adipose tissue in diet-induced obesity. The polypeptide is C-type lectin domain family 10 member A (Clec10a) (Mus musculus (Mouse)).